Consider the following 137-residue polypeptide: Large ribosomal subunit protein uL16 (137 aa).

It belongs to the universal ribosomal protein uL16 family. As to quaternary structure, part of the 50S ribosomal subunit.

Its function is as follows. Binds 23S rRNA and is also seen to make contacts with the A and possibly P site tRNAs. The polypeptide is Large ribosomal subunit protein uL16 (Leptospira biflexa serovar Patoc (strain Patoc 1 / Ames)).